The primary structure comprises 397 residues: Riboflavin biosynthesis protein RibBA (397 aa).

A DHBP synthase region spans residues 1-199; that stretch reads MFHRIEEALE…IEDLIAYRRH (199 aa). D-ribulose 5-phosphate contacts are provided by residues 26–27, aspartate 31, 138–142, and glutamate 162; these read RE and RAGHT. Position 27 (glutamate 27) interacts with Mg(2+). Histidine 141 serves as a coordination point for Mg(2+). Residues 200-397 form a GTP cyclohydrolase II region; that stretch reads HETLVTREVE…VNKLGHLLNL (198 aa). 250-254 is a binding site for GTP; sequence RVHSE. Residues cysteine 255, cysteine 266, and cysteine 268 each coordinate Zn(2+). GTP-binding positions include glutamine 271, 293–295, and threonine 315; that span reads EGR. Aspartate 327 functions as the Proton acceptor; for GTP cyclohydrolase activity in the catalytic mechanism. Arginine 329 (nucleophile; for GTP cyclohydrolase activity) is an active-site residue. Threonine 350 and lysine 355 together coordinate GTP.

The protein in the N-terminal section; belongs to the DHBP synthase family. In the C-terminal section; belongs to the GTP cyclohydrolase II family. It depends on Mg(2+) as a cofactor. Mn(2+) is required as a cofactor. Requires Zn(2+) as cofactor.

It catalyses the reaction D-ribulose 5-phosphate = (2S)-2-hydroxy-3-oxobutyl phosphate + formate + H(+). It carries out the reaction GTP + 4 H2O = 2,5-diamino-6-hydroxy-4-(5-phosphoribosylamino)-pyrimidine + formate + 2 phosphate + 3 H(+). It functions in the pathway cofactor biosynthesis; riboflavin biosynthesis; 2-hydroxy-3-oxobutyl phosphate from D-ribulose 5-phosphate: step 1/1. The protein operates within cofactor biosynthesis; riboflavin biosynthesis; 5-amino-6-(D-ribitylamino)uracil from GTP: step 1/4. In terms of biological role, catalyzes the conversion of D-ribulose 5-phosphate to formate and 3,4-dihydroxy-2-butanone 4-phosphate. Catalyzes the conversion of GTP to 2,5-diamino-6-ribosylamino-4(3H)-pyrimidinone 5'-phosphate (DARP), formate and pyrophosphate. The sequence is that of Riboflavin biosynthesis protein RibBA from Bacillus cereus (strain G9842).